Here is a 123-residue protein sequence, read N- to C-terminus: Protein LLP homolog (123 aa).

Basic residues predominate over residues 1 to 21 (MAKSLRSKWKRKMRAEKRKKN). Disordered stretches follow at residues 1–22 (MAKS…KKNA) and 61–123 (DLDV…KLAW). The segment covering 70 to 89 (ESSKMDTELKRNKKNLRDQH) has biased composition (basic and acidic residues). Positions 100–123 (QQKKLKSQCGKKKGKSKQAKKLAW) are enriched in basic residues.

This sequence belongs to the learning-associated protein family.

The protein localises to the nucleus. It is found in the nucleolus. Its subcellular location is the chromosome. Functionally, regulates dendritic and spine growth and synaptic transmission. The sequence is that of Protein LLP homolog (llph) from Xenopus laevis (African clawed frog).